The primary structure comprises 481 residues: Bifunctional protein GlmU (481 aa).

Residues 1–235 (MTHKERPLDV…PDEVMGANDR (235 aa)) form a pyrophosphorylase region. UDP-N-acetyl-alpha-D-glucosamine-binding positions include 13–16 (LAAG), lysine 27, glutamine 78, 83–84 (GT), 107–109 (YGD), glycine 146, glutamate 161, asparagine 176, and asparagine 233. Position 109 (aspartate 109) interacts with Mg(2+). Asparagine 233 serves as a coordination point for Mg(2+). The segment at 236–256 (VQLAQAAAVLRRRINTAHMQA) is linker. The tract at residues 257–481 (GVTLQDPSTI…PWLAGWLERQ (225 aa)) is N-acetyltransferase. Positions 339 and 357 each coordinate UDP-N-acetyl-alpha-D-glucosamine. The Proton acceptor role is filled by histidine 369. Residues tyrosine 372 and asparagine 383 each coordinate UDP-N-acetyl-alpha-D-glucosamine. Alanine 386, serine 411, alanine 429, and arginine 446 together coordinate acetyl-CoA.

This sequence in the N-terminal section; belongs to the N-acetylglucosamine-1-phosphate uridyltransferase family. In the C-terminal section; belongs to the transferase hexapeptide repeat family. In terms of assembly, homotrimer. The cofactor is Mg(2+).

Its subcellular location is the cytoplasm. It carries out the reaction alpha-D-glucosamine 1-phosphate + acetyl-CoA = N-acetyl-alpha-D-glucosamine 1-phosphate + CoA + H(+). The enzyme catalyses N-acetyl-alpha-D-glucosamine 1-phosphate + UTP + H(+) = UDP-N-acetyl-alpha-D-glucosamine + diphosphate. It participates in nucleotide-sugar biosynthesis; UDP-N-acetyl-alpha-D-glucosamine biosynthesis; N-acetyl-alpha-D-glucosamine 1-phosphate from alpha-D-glucosamine 6-phosphate (route II): step 2/2. Its pathway is nucleotide-sugar biosynthesis; UDP-N-acetyl-alpha-D-glucosamine biosynthesis; UDP-N-acetyl-alpha-D-glucosamine from N-acetyl-alpha-D-glucosamine 1-phosphate: step 1/1. It functions in the pathway bacterial outer membrane biogenesis; LPS lipid A biosynthesis. Catalyzes the last two sequential reactions in the de novo biosynthetic pathway for UDP-N-acetylglucosamine (UDP-GlcNAc). The C-terminal domain catalyzes the transfer of acetyl group from acetyl coenzyme A to glucosamine-1-phosphate (GlcN-1-P) to produce N-acetylglucosamine-1-phosphate (GlcNAc-1-P), which is converted into UDP-GlcNAc by the transfer of uridine 5-monophosphate (from uridine 5-triphosphate), a reaction catalyzed by the N-terminal domain. The protein is Bifunctional protein GlmU of Deinococcus geothermalis (strain DSM 11300 / CIP 105573 / AG-3a).